The primary structure comprises 290 residues: Porphobilinogen deaminase (290 aa).

Position 237 is an S-(dipyrrolylmethanemethyl)cysteine (C237).

It belongs to the HMBS family. Monomer. It depends on dipyrromethane as a cofactor.

It catalyses the reaction 4 porphobilinogen + H2O = hydroxymethylbilane + 4 NH4(+). It functions in the pathway porphyrin-containing compound metabolism; protoporphyrin-IX biosynthesis; coproporphyrinogen-III from 5-aminolevulinate: step 2/4. Tetrapolymerization of the monopyrrole PBG into the hydroxymethylbilane pre-uroporphyrinogen in several discrete steps. The protein is Porphobilinogen deaminase of Clostridium botulinum (strain Kyoto / Type A2).